We begin with the raw amino-acid sequence, 438 residues long: Citrate synthase (438 aa).

Active-site residues include His-306 and Asp-364.

It belongs to the citrate synthase family.

It catalyses the reaction oxaloacetate + acetyl-CoA + H2O = citrate + CoA + H(+). It functions in the pathway carbohydrate metabolism; tricarboxylic acid cycle; isocitrate from oxaloacetate: step 1/2. In Bartonella quintana (strain Toulouse) (Rochalimaea quintana), this protein is Citrate synthase (gltA).